A 414-amino-acid polypeptide reads, in one-letter code: Multidrug resistance protein MdtG (414 aa).

10 helical membrane-spanning segments follow: residues 14–34 (LFVT…IMPF), 56–76 (LVFS…GSLA), 89–109 (ALGM…WQFL), 113–133 (ALLG…ATQV), 144–164 (TLST…GLLA), 171–191 (PVFF…WFYV), 219–239 (ILSL…IAPI), 254–274 (LAFV…ISAP), 288–308 (ILIA…FVQT), and 376–396 (AVFC…YWCL).

It belongs to the major facilitator superfamily. DHA1 family. MdtG (TC 2.A.1.2.20) subfamily.

It localises to the cell inner membrane. The protein is Multidrug resistance protein MdtG of Yersinia enterocolitica serotype O:8 / biotype 1B (strain NCTC 13174 / 8081).